Reading from the N-terminus, the 180-residue chain is DNA-directed RNA polymerase subunit omega (180 aa).

Residues Ile100–Ser180 form a disordered region. Composition is skewed to acidic residues over residues Glu137–Thr151 and Ala159–Ser180.

It belongs to the RNA polymerase subunit omega family. The RNAP catalytic core consists of 2 alpha, 1 beta, 1 beta' and 1 omega subunit. When a sigma factor is associated with the core the holoenzyme is formed, which can initiate transcription.

The catalysed reaction is RNA(n) + a ribonucleoside 5'-triphosphate = RNA(n+1) + diphosphate. Its function is as follows. Promotes RNA polymerase assembly. Latches the N- and C-terminal regions of the beta' subunit thereby facilitating its interaction with the beta and alpha subunits. In Pelagibacter ubique (strain HTCC1062), this protein is DNA-directed RNA polymerase subunit omega.